The sequence spans 185 residues: Elongation factor P (185 aa).

The protein belongs to the elongation factor P family.

The protein resides in the cytoplasm. Its pathway is protein biosynthesis; polypeptide chain elongation. Functionally, involved in peptide bond synthesis. Stimulates efficient translation and peptide-bond synthesis on native or reconstituted 70S ribosomes in vitro. Probably functions indirectly by altering the affinity of the ribosome for aminoacyl-tRNA, thus increasing their reactivity as acceptors for peptidyl transferase. The protein is Elongation factor P of Gloeothece citriformis (strain PCC 7424) (Cyanothece sp. (strain PCC 7424)).